A 475-amino-acid polypeptide reads, in one-letter code: Siroheme synthase (475 aa).

The tract at residues 1–204 is precorrin-2 dehydrogenase /sirohydrochlorin ferrochelatase; the sequence is MDYLPVFLNI…GRDQAAQDYL (204 aa). NAD(+)-binding positions include 22-23 and 43-44; these read EI and PA. Ser129 is modified (phosphoserine). The interval 218–475 is uroporphyrinogen-III C-methyltransferase; that stretch reads GEVYLVGAGP…MGTSSGPGYP (258 aa). Pro227 contributes to the S-adenosyl-L-methionine binding site. Asp250 serves as the catalytic Proton acceptor. The active-site Proton donor is Lys272. Residues 303 to 305, Ile308, 333 to 334, Met385, and Gly414 each bind S-adenosyl-L-methionine; these read GGD and TA.

It in the N-terminal section; belongs to the precorrin-2 dehydrogenase / sirohydrochlorin ferrochelatase family. In the C-terminal section; belongs to the precorrin methyltransferase family.

The enzyme catalyses uroporphyrinogen III + 2 S-adenosyl-L-methionine = precorrin-2 + 2 S-adenosyl-L-homocysteine + H(+). The catalysed reaction is precorrin-2 + NAD(+) = sirohydrochlorin + NADH + 2 H(+). It carries out the reaction siroheme + 2 H(+) = sirohydrochlorin + Fe(2+). Its pathway is cofactor biosynthesis; adenosylcobalamin biosynthesis; precorrin-2 from uroporphyrinogen III: step 1/1. It functions in the pathway cofactor biosynthesis; adenosylcobalamin biosynthesis; sirohydrochlorin from precorrin-2: step 1/1. The protein operates within porphyrin-containing compound metabolism; siroheme biosynthesis; precorrin-2 from uroporphyrinogen III: step 1/1. It participates in porphyrin-containing compound metabolism; siroheme biosynthesis; siroheme from sirohydrochlorin: step 1/1. Its pathway is porphyrin-containing compound metabolism; siroheme biosynthesis; sirohydrochlorin from precorrin-2: step 1/1. In terms of biological role, multifunctional enzyme that catalyzes the SAM-dependent methylations of uroporphyrinogen III at position C-2 and C-7 to form precorrin-2 via precorrin-1. Then it catalyzes the NAD-dependent ring dehydrogenation of precorrin-2 to yield sirohydrochlorin. Finally, it catalyzes the ferrochelation of sirohydrochlorin to yield siroheme. This chain is Siroheme synthase, found in Nitrosomonas europaea (strain ATCC 19718 / CIP 103999 / KCTC 2705 / NBRC 14298).